We begin with the raw amino-acid sequence, 509 residues long: MEEIQRYLQLDRSQQHNFLYPLIFQEYIYALAHDPGLNRNRSILLENPGSNNKFSFLIVKRLITRMYQQNHFLISTNDFNKNSFLGCNKNLYSQMISEGFAFIVEIPFSLRLISSLSSFEGKKIFKSHNLRSIHSTFPFLEDNFAHLNYVLDILIPYPVHLEILVQTLRYWVKDASSLHLLRFFLHEYWNLNSLITSKKPGYSFSKKNQRFFFFLYNSYVYECESTFVFLRNQSSHLRSTSFGALLERIFFYGKIERLVEVFAKDFQVTLWLFKDPFMHYVRYQGKSILASKGTFLLINKWKFYLVNFWQCHFSLCFHTGRIHINQLSNHSRDFMGYLSSVRLNPSMVRSQMLENSFLINNAIKKFDTLVPIIPLIGSLAKANFCTVLGHPISKPVWSDLSDSDIIARFGRICRNLFHYYSGSSKKKTLYRIKYILRLSCARTLARKHKSTVRTFLKRSGSELLEEFLTSEEQVLSLTFPRASSSLGGVYRSRIWYLDIFCINDLANSQ.

The protein belongs to the intron maturase 2 family. MatK subfamily.

The protein localises to the plastid. It is found in the chloroplast. In terms of biological role, usually encoded in the trnK tRNA gene intron. Probably assists in splicing its own and other chloroplast group II introns. The protein is Maturase K of Nicotiana bigelovii (Bigelov's tobacco).